Here is a 122-residue protein sequence, read N- to C-terminus: Large ribosomal subunit protein uL14 (122 aa).

It belongs to the universal ribosomal protein uL14 family. As to quaternary structure, part of the 50S ribosomal subunit. Forms a cluster with proteins L3 and L19. In the 70S ribosome, L14 and L19 interact and together make contacts with the 16S rRNA in bridges B5 and B8.

Functionally, binds to 23S rRNA. Forms part of two intersubunit bridges in the 70S ribosome. The sequence is that of Large ribosomal subunit protein uL14 from Chlorobium chlorochromatii (strain CaD3).